A 300-amino-acid polypeptide reads, in one-letter code: Inosose dehydratase (300 aa).

This sequence belongs to the IolE/MocC family. Glutathione serves as cofactor. Co(2+) is required as a cofactor. It depends on Mn(2+) as a cofactor.

The enzyme catalyses scyllo-inosose = 3D-3,5/4-trihydroxycyclohexane-1,2-dione + H2O. Catalyzes the dehydration of inosose (2-keto-myo-inositol, 2KMI or 2,4,6/3,5-pentahydroxycyclohexanone) to 3D-(3,5/4)-trihydroxycyclohexane-1,2-dione (D-2,3-diketo-4-deoxy-epi-inositol). This Mesomycoplasma hyopneumoniae (strain 232) (Mycoplasma hyopneumoniae) protein is Inosose dehydratase.